The primary structure comprises 356 residues: Phosphoribosylformylglycinamidine cyclo-ligase (356 aa).

Belongs to the AIR synthase family.

It is found in the cytoplasm. The enzyme catalyses 2-formamido-N(1)-(5-O-phospho-beta-D-ribosyl)acetamidine + ATP = 5-amino-1-(5-phospho-beta-D-ribosyl)imidazole + ADP + phosphate + H(+). The protein operates within purine metabolism; IMP biosynthesis via de novo pathway; 5-amino-1-(5-phospho-D-ribosyl)imidazole from N(2)-formyl-N(1)-(5-phospho-D-ribosyl)glycinamide: step 2/2. This is Phosphoribosylformylglycinamidine cyclo-ligase from Sinorhizobium medicae (strain WSM419) (Ensifer medicae).